The chain runs to 59 residues: Large ribosomal subunit protein bL32 (59 aa).

This sequence belongs to the bacterial ribosomal protein bL32 family. In terms of assembly, part of the 50S ribosomal subunit.

In Bacillus subtilis (strain 168), this protein is Large ribosomal subunit protein bL32 (rpmF).